Consider the following 136-residue polypeptide: Histone H3.3C-like (136 aa).

Position 3 is an asymmetric dimethylarginine; by PRMT6; alternate (Arg3). At Arg3 the chain carries Citrulline; alternate. Phosphothreonine; by HASPIN is present on Thr4. Allysine; alternate is present on Lys5. N6,N6,N6-trimethyllysine; alternate is present on Lys5. N6,N6-dimethyllysine; alternate is present on Lys5. Lys5 is modified (N6-(2-hydroxyisobutyryl)lysine; alternate). Lys5 bears the N6-(beta-hydroxybutyryl)lysine; alternate mark. Residue Lys5 is modified to N6-acetyllysine; alternate. The residue at position 5 (Lys5) is an N6-methyllysine; alternate. Phosphothreonine; by PKC is present on Thr7. An N6,N6,N6-trimethyllysine; alternate modification is found at Lys10. N6,N6-dimethyllysine; alternate is present on Lys10. Residue Lys10 is modified to N6-(2-hydroxyisobutyryl)lysine; alternate. Position 10 is an N6-acetyllysine; alternate (Lys10). Lys10 is subject to N6-methyllysine; alternate. Ser11 is modified (ADP-ribosylserine; alternate). Phosphoserine; alternate; by AURKB, AURKC, RPS6KA3, RPS6KA4 and RPS6KA5 is present on Ser11. Thr12 is subject to Phosphothreonine; by PKC. An N6-(2-hydroxyisobutyryl)lysine; alternate modification is found at Lys15. The residue at position 15 (Lys15) is an N6-(beta-hydroxybutyryl)lysine; alternate. Lys15 bears the N6-acetyllysine; alternate mark. Lys15 carries the N6-glutaryllysine; alternate modification. Lys15 is modified (N6-succinyllysine; alternate). Arg18 carries the post-translational modification Citrulline; alternate. Asymmetric dimethylarginine; by CARM1; alternate is present on Arg18. N6-(2-hydroxyisobutyryl)lysine; alternate occurs at positions 19 and 28. An N6-(beta-hydroxybutyryl)lysine; alternate modification is found at Lys19. N6-acetyllysine; alternate is present on residues Lys19 and Lys28. 2 positions are modified to N6-methyllysine; alternate: Lys19 and Lys28. 2 positions are modified to N6-glutaryllysine; alternate: Lys19 and Lys28. The residue at position 19 (Lys19) is an N6-butyryllysine; alternate. Lys28 bears the N6,N6,N6-trimethyllysine; alternate mark. Lys28 is modified (N6,N6-dimethyllysine; alternate). Ser29 is subject to ADP-ribosylserine; alternate. A Phosphoserine; alternate; by AURKB, AURKC and RPS6KA5 modification is found at Ser29. At Ser32 the chain carries Phosphoserine. Position 38 is an N6-methyllysine (Lys38). A Phosphotyrosine modification is found at Tyr42. Position 57 is an N6,N6,N6-trimethyllysine; alternate (Lys57). The residue at position 57 (Lys57) is an N6-(2-hydroxyisobutyryl)lysine; alternate. The residue at position 57 (Lys57) is an N6-(beta-hydroxybutyryl)lysine; alternate. An N6-acetyllysine; alternate modification is found at Lys57. Position 57 is an N6-glutaryllysine; alternate (Lys57). N6-succinyllysine; alternate is present on Lys57. Lys57 carries the N6-methyllysine; by EHMT2; alternate modification. Residue Ser58 is modified to Phosphoserine. N6-(2-hydroxyisobutyryl)lysine; alternate occurs at positions 65 and 80. N6-methyllysine; alternate occurs at positions 65 and 80. Position 80 is an N6,N6,N6-trimethyllysine; alternate (Lys80). Lys80 is modified (N6,N6-dimethyllysine; alternate). At Lys80 the chain carries N6-acetyllysine; alternate. Lys80 bears the N6-glutaryllysine; alternate mark. An N6-succinyllysine; alternate modification is found at Lys80. Position 81 is a phosphothreonine (Thr81). The residue at position 87 (Ser87) is a Phosphoserine.

It belongs to the histone H3 family. The nucleosome is a histone octamer containing two molecules each of H2A, H2B, H3 and H4 assembled in one H3-H4 heterotetramer and two H2A-H2B heterodimers. The octamer wraps approximately 147 bp of DNA. Acetylation is generally linked to gene activation. Acetylation on Lys-19 favors methylation at Arg-18. Post-translationally, citrullination at Arg-18 by PADI4 impairs methylation and represses transcription. In terms of processing, asymmetric dimethylation at Arg-18 (H3R17me2a) by CARM1 is linked to gene activation. Asymmetric dimethylation at Arg-3 (H3R2me2a) by PRMT6 is linked to gene repression and is mutually exclusive with H3 Lys-5 methylation (H3K4me2 and H3K4me3). H3R2me2a is present at the 3' of genes regardless of their transcription state and is enriched on inactive promoters, while it is absent on active promoters. Methylation at Lys-5 (H3K4me) and Lys-80 (H3K79me) are linked to gene activation. Methylation at Lys-5 (H3K4me) facilitates subsequent acetylation of H3 and H4. Methylation at Lys-80 (H3K79me) is associated with DNA double-strand break (DSB) responses and is a specific target for TP53BP1. Methylation at Lys-10 (H3K9me) and Lys-28 (H3K27me) are linked to gene repression. Methylation at Lys-10 (H3K9me) is a specific target for HP1 proteins (CBX1, CBX3 and CBX5) and prevents subsequent phosphorylation at Ser-11 (H3S10ph) and acetylation of H3 and H4. Methylation at Lys-5 (H3K4me) and Lys-80 (H3K79me) require preliminary monoubiquitination of H2B at 'Lys-120'. Methylation at Lys-10 (H3K9me) and Lys-28 (H3K27me) are enriched in inactive X chromosome chromatin. Monomethylation at Lys-57 (H3K56me1) by EHMT2/G9A in G1 phase promotes interaction with PCNA and is required for DNA replication. Post-translationally, phosphorylated at Thr-4 (H3T3ph) by HASPIN during prophase and dephosphorylated during anaphase. Phosphorylation at Ser-11 (H3S10ph) by AURKB is crucial for chromosome condensation and cell-cycle progression during mitosis and meiosis. In addition phosphorylation at Ser-11 (H3S10ph) by RPS6KA4 and RPS6KA5 is important during interphase because it enables the transcription of genes following external stimulation, like mitogens, stress, growth factors or UV irradiation and result in the activation of genes, such as c-fos and c-jun. Phosphorylation at Ser-11 (H3S10ph), which is linked to gene activation, prevents methylation at Lys-10 (H3K9me) but facilitates acetylation of H3 and H4. Phosphorylation at Ser-11 (H3S10ph) by AURKB mediates the dissociation of HP1 proteins (CBX1, CBX3 and CBX5) from heterochromatin. Phosphorylation at Ser-11 (H3S10ph) is also an essential regulatory mechanism for neoplastic cell transformation. Phosphorylated at Ser-29 (H3S28ph) by MAP3K20 isoform 1, RPS6KA5 or AURKB during mitosis or upon ultraviolet B irradiation. Phosphorylation at Thr-7 (H3T6ph) by PRKCB is a specific tag for epigenetic transcriptional activation that prevents demethylation of Lys-5 (H3K4me) by LSD1/KDM1A. At centromeres, specifically phosphorylated at Thr-12 (H3T11ph) from prophase to early anaphase, by DAPK3 and PKN1. Phosphorylation at Thr-12 (H3T11ph) by PKN1 or isoform M2 of PKM (PKM2) is a specific tag for epigenetic transcriptional activation that promotes demethylation of Lys-10 (H3K9me) by KDM4C/JMJD2C. Phosphorylation at Tyr-42 (H3Y41ph) by JAK2 promotes exclusion of CBX5 (HP1 alpha) from chromatin. In terms of processing, lysine deamination at Lys-5 (H3K4all) to form allysine is mediated by LOXL2. Allysine formation by LOXL2 only takes place on H3K4me3 and results in gene repression. Butyrylation of histones marks active promoters and competes with histone acetylation. It is present during late spermatogenesis. Post-translationally, succinylation at Lys-80 (H3K79succ) by KAT2A takes place with a maximum frequency around the transcription start sites of genes. It gives a specific tag for epigenetic transcription activation. In terms of processing, serine ADP-ribosylation constitutes the primary form of ADP-ribosylation of proteins in response to DNA damage. Serine ADP-ribosylation at Ser-11 (H3S10ADPr) is mutually exclusive with phosphorylation at Ser-11 (H3S10ph) and impairs acetylation at Lys-10 (H3K9ac).

It localises to the nucleus. The protein resides in the chromosome. Functionally, core component of nucleosome. Nucleosomes wrap and compact DNA into chromatin, limiting DNA accessibility to the cellular machineries which require DNA as a template. Histones thereby play a central role in transcription regulation, DNA repair, DNA replication and chromosomal stability. DNA accessibility is regulated via a complex set of post-translational modifications of histones, also called histone code, and nucleosome remodeling. The sequence is that of Histone H3.3C-like from Bos taurus (Bovine).